The chain runs to 404 residues: Activity-regulated cytoskeleton-associated protein (404 aa).

The stretch at 51–78 (EVSKQVERELKGLQKSVGKLENNLEDHV) forms a coiled coil. Residues 351 to 404 (VQGNMDHSEEPSPQRTPEIQSGDSVESMPPSTTASPVPSNGTQPEPPSPPATVI) are disordered. Residues 363–393 (PQRTPEIQSGDSVESMPPSTTASPVPSNGTQ) show a composition bias toward polar residues. Positions 394–404 (PEPPSPPATVI) are enriched in pro residues.

The protein belongs to the ARC/ARG3.1 family. Homooligomer; homooligomerizes into virion-like capsids. In terms of processing, palmitoylation anchors the protein into the membrane by allowing direct insertion into the hydrophobic core of the lipid bilayer. As to expression, expressed at various levels throughout the brain.

The protein resides in the extracellular vesicle membrane. The protein localises to the postsynaptic cell membrane. It is found in the synapse. It localises to the postsynaptic density. Its subcellular location is the early endosome membrane. The protein resides in the cell projection. The protein localises to the dendrite. It is found in the cytoplasm. It localises to the cytoskeleton. Its subcellular location is the cell cortex. The protein resides in the dendritic spine. Functionally, master regulator of synaptic plasticity that self-assembles into virion-like capsids that encapsulate RNAs and mediate intercellular RNA transfer in the nervous system. ARC protein is released from neurons in extracellular vesicles that mediate the transfer of ARC mRNA into new target cells, where ARC mRNA can undergo activity-dependent translation. ARC capsids are endocytosed and are able to transfer ARC mRNA into the cytoplasm of neurons. Acts as a key regulator of synaptic plasticity: required for protein synthesis-dependent forms of long-term potentiation (LTP) and depression (LTD) and for the formation of long-term memory. Regulates synaptic plasticity by promoting endocytosis of AMPA receptors (AMPARs) in response to synaptic activity: this endocytic pathway maintains levels of surface AMPARs in response to chronic changes in neuronal activity through synaptic scaling, thereby contributing to neuronal homeostasis. Acts as a postsynaptic mediator of activity-dependent synapse elimination in the developing cerebellum by mediating elimination of surplus climbing fiber synapses. Accumulates at weaker synapses, probably to prevent their undesired enhancement. This suggests that ARC-containing virion-like capsids may be required to eliminate synaptic material. The sequence is that of Activity-regulated cytoskeleton-associated protein from Gallus gallus (Chicken).